A 257-amino-acid chain; its full sequence is E3 ubiquitin-protein ligase RNF170 (257 aa).

Residues 1–24 (MADNQEGRPYFPLDEGSIIEGVSD) lie on the Lumenal side of the membrane. A helical transmembrane segment spans residues 25–45 (QVIVVVLLSFVAVGSLLYLLL). The Cytoplasmic segment spans residues 46–200 (RNDEQNIHPE…GGLFWMFRIR (155 aa)). Residues 87-130 (CPVCLQQATFPVETNCGHLFCGSCIIAYWRYGSWLGAINCPICR) form an RING-type zinc finger. A helical membrane pass occupies residues 201-221 (IVLCLLGALFYLVSPLDIIPE). Ala222 is a topological domain (lumenal). A helical transmembrane segment spans residues 223-243 (VFGLLGFLDDFFVLFLLLIYI). Residues 244–257 (SIMYREVVTQRLYR) are Cytoplasmic-facing.

The protein localises to the endoplasmic reticulum membrane. The catalysed reaction is S-ubiquitinyl-[E2 ubiquitin-conjugating enzyme]-L-cysteine + [acceptor protein]-L-lysine = [E2 ubiquitin-conjugating enzyme]-L-cysteine + N(6)-ubiquitinyl-[acceptor protein]-L-lysine.. It functions in the pathway protein modification; protein ubiquitination. In terms of biological role, E3 ubiquitin-protein ligase that plays an essential role in stimulus-induced inositol 1,4,5-trisphosphate receptor (ITPR) ubiquitination and degradation via the endoplasmic reticulum-associated degradation (ERAD) pathway. Also involved in ITPR turnover in resting cells. This is E3 ubiquitin-protein ligase RNF170 (rnf170) from Xenopus tropicalis (Western clawed frog).